A 471-amino-acid chain; its full sequence is MPTPLILHDDRLLPADPATRAIARRLYAQTAALPIISPHGHTDPAWFATDAPFANATELLLVPDHYVFRMLYSQGIDLDQLGIPHADGSRAPVDPREAWRVFASQFALLRGTPSALWLNHVFHQVFDLRIRLDAGSADHYYDHITAALQTPAFRPRALFERFNIEVIATTESPLDTLEHHATIRDSGWTGRVLTAYRPDAVVDPEHEQFASALQQFAALTGEDVMQWPGYLCAHRQRRAFFAAAGATSTDHGHPSAATADLSPAEAQRLFDTVVRGQATPAQAELFRAQVLTEMAAMSVDDGLVMQLHPGCFRNHNRQLFERYGRDKGADIPMRTDYVHALKPLLDRFGNDPRFRLIVFTLDETSYSRELAPLAGHYPALLLGPAWWFHDAPEGMWRFREQTLASAGFYNTVGFNDDTRAFLSIPARHDVARRVDSAFLAKLVAEHRLDEDEAMEVAIDLAYRLPKQAYKL.

The protein belongs to the metallo-dependent hydrolases superfamily. Uronate isomerase family.

It catalyses the reaction D-glucuronate = D-fructuronate. It carries out the reaction aldehydo-D-galacturonate = keto-D-tagaturonate. It participates in carbohydrate metabolism; pentose and glucuronate interconversion. The chain is Uronate isomerase from Xanthomonas campestris pv. campestris (strain 8004).